The following is a 269-amino-acid chain: Formamidopyrimidine-DNA glycosylase (269 aa).

Catalysis depends on proline 2, which acts as the Schiff-base intermediate with DNA. Glutamate 3 functions as the Proton donor in the catalytic mechanism. The Proton donor; for beta-elimination activity role is filled by lysine 57. DNA is bound by residues histidine 90, arginine 109, and lysine 150. The FPG-type zinc-finger motif lies at 235-269 (QVYGKAGEPCPECGEAIQEQKIGQRNTFYCSYCQC). Residue arginine 259 is the Proton donor; for delta-elimination activity of the active site.

This sequence belongs to the FPG family. Monomer. Zn(2+) is required as a cofactor.

The catalysed reaction is Hydrolysis of DNA containing ring-opened 7-methylguanine residues, releasing 2,6-diamino-4-hydroxy-5-(N-methyl)formamidopyrimidine.. The enzyme catalyses 2'-deoxyribonucleotide-(2'-deoxyribose 5'-phosphate)-2'-deoxyribonucleotide-DNA = a 3'-end 2'-deoxyribonucleotide-(2,3-dehydro-2,3-deoxyribose 5'-phosphate)-DNA + a 5'-end 5'-phospho-2'-deoxyribonucleoside-DNA + H(+). Functionally, involved in base excision repair of DNA damaged by oxidation or by mutagenic agents. Acts as a DNA glycosylase that recognizes and removes damaged bases. Has a preference for oxidized purines, such as 7,8-dihydro-8-oxoguanine (8-oxoG). Has AP (apurinic/apyrimidinic) lyase activity and introduces nicks in the DNA strand. Cleaves the DNA backbone by beta-delta elimination to generate a single-strand break at the site of the removed base with both 3'- and 5'-phosphates. The chain is Formamidopyrimidine-DNA glycosylase from Vibrio vulnificus (strain CMCP6).